The sequence spans 142 residues: HTH-type transcriptional regulator MntR (142 aa).

The HTH dtxR-type domain occupies 1–63; sequence MPTPSMEDYI…YEKYRGLILT (63 aa). Mn(2+) is bound by residues aspartate 8, glutamate 11, histidine 77, glutamate 99, glutamate 102, and histidine 103.

Belongs to the DtxR/MntR family. As to quaternary structure, homodimer.

It is found in the cytoplasm. DNA binding is strongly activated by Mn(2+). In terms of biological role, central regulator of manganese homeostasis. The chain is HTH-type transcriptional regulator MntR from Listeria innocua serovar 6a (strain ATCC BAA-680 / CLIP 11262).